A 213-amino-acid polypeptide reads, in one-letter code: Orotate phosphoribosyltransferase (213 aa).

5-phospho-alpha-D-ribose 1-diphosphate is bound at residue lysine 26. 34–35 (FF) lines the orotate pocket. 5-phospho-alpha-D-ribose 1-diphosphate-binding positions include 72 to 73 (YK), arginine 99, lysine 100, lysine 103, histidine 105, and 124 to 132 (DDVITAGTA). Orotate is bound by residues threonine 128 and arginine 156.

Belongs to the purine/pyrimidine phosphoribosyltransferase family. PyrE subfamily. As to quaternary structure, homodimer. Mg(2+) serves as cofactor.

It carries out the reaction orotidine 5'-phosphate + diphosphate = orotate + 5-phospho-alpha-D-ribose 1-diphosphate. The protein operates within pyrimidine metabolism; UMP biosynthesis via de novo pathway; UMP from orotate: step 1/2. Catalyzes the transfer of a ribosyl phosphate group from 5-phosphoribose 1-diphosphate to orotate, leading to the formation of orotidine monophosphate (OMP). The sequence is that of Orotate phosphoribosyltransferase from Haemophilus influenzae (strain ATCC 51907 / DSM 11121 / KW20 / Rd).